The primary structure comprises 199 residues: Phycocyanobilin lyase CpcT (199 aa).

The protein belongs to the CpcT/CpeT biliprotein lyase family.

Catalyzes the site-selective attachment of phycocyanobilin (PCB) to 'Cys-154' of C-phycocyanin subunit beta (CpcB) and to 'Cys-153' of phycoerythrocyanin subunit beta (PecB). Does not have chromophore lyase activity for ApcA1, ApcA2, ApcB, ApcD, ApcF or PecA. The polypeptide is Phycocyanobilin lyase CpcT (cpcT1) (Nostoc sp. (strain PCC 7120 / SAG 25.82 / UTEX 2576)).